The following is a 124-amino-acid chain: UPF0357 protein C1687.07 (124 aa).

The first 24 residues, 1–24 (MASFHIIVSYVTVVLAIIIAITFA), serve as a signal peptide directing secretion.

This sequence belongs to the UPF0357 family.

The sequence is that of UPF0357 protein C1687.07 from Schizosaccharomyces pombe (strain 972 / ATCC 24843) (Fission yeast).